The primary structure comprises 135 residues: Ribonuclease P protein component (135 aa).

It belongs to the RnpA family. In terms of assembly, consists of a catalytic RNA component (M1 or rnpB) and a protein subunit.

The catalysed reaction is Endonucleolytic cleavage of RNA, removing 5'-extranucleotides from tRNA precursor.. Functionally, RNaseP catalyzes the removal of the 5'-leader sequence from pre-tRNA to produce the mature 5'-terminus. It can also cleave other RNA substrates such as 4.5S RNA. The protein component plays an auxiliary but essential role in vivo by binding to the 5'-leader sequence and broadening the substrate specificity of the ribozyme. The chain is Ribonuclease P protein component from Pseudomonas aeruginosa (strain LESB58).